A 388-amino-acid polypeptide reads, in one-letter code: Pregnancy-associated glycoprotein (388 aa).

Positions 1-15 (MKWFGVLGLVTLSEC) are cleaved as a signal peptide. Positions 74 to 385 (YMGIISVGTP…DRENDRIGLA (312 aa)) constitute a Peptidase A1 domain. Aspartate 92 is an active-site residue. 2 disulfides stabilise this stretch: cysteine 105–cysteine 110 and cysteine 266–cysteine 270. The active site involves aspartate 275. A disulfide bond links cysteine 309 and cysteine 344. An N-linked (GlcNAc...) asparagine glycan is attached at asparagine 356.

Belongs to the peptidase A1 family. Trophoblast and placental tissue.

The protein resides in the secreted. Its subcellular location is the extracellular space. The protein is Pregnancy-associated glycoprotein (PAG) of Equus caballus (Horse).